Here is a 104-residue protein sequence, read N- to C-terminus: uncharacterized protein (104 aa).

Disordered stretches follow at residues 1 to 48 (MLRR…NNQP) and 66 to 104 (QENT…RRCS).

This is an uncharacterized protein from Saccharomyces cerevisiae (strain ATCC 204508 / S288c) (Baker's yeast).